Consider the following 108-residue polypeptide: Glutaredoxin-1 (108 aa).

One can recognise a Glutaredoxin domain in the interval 3–106 (EEFVQQRLAN…DILSSIGVLR (104 aa)). Cys-23 and Cys-26 are joined by a disulfide.

Belongs to the glutaredoxin family.

Its subcellular location is the virion. Its function is as follows. Displays thioltransferase and dehydroascorbate reductase activities. In Vaccinia virus (strain Copenhagen) (VACV), this protein is Glutaredoxin-1 (OPG075).